The chain runs to 293 residues: Cep170-like protein (293 aa).

2 disordered regions span residues Pro78 to Thr110 and Phe217 to Glu270. Residues Lys227 to Leu245 are compositionally biased toward polar residues.

Belongs to the CEP170 family.

In Homo sapiens (Human), this protein is Cep170-like protein (CEP170P1).